An 836-amino-acid polypeptide reads, in one-letter code: Eukaryotic translation initiation factor 3 subunit C (836 aa).

Residues 1 to 97 (MSRFFVSGYD…RRVVKSAKEK (97 aa)) form a disordered region. A compositionally biased stretch (acidic residues) spans 13–55 (SSSEEEDLLTSSEEELMSSEQESDSEFDDEFANDDDSDSSDSD). The span at 86–97 (EGRRVVKSAKEK) shows a compositional bias: basic and acidic residues. Residues 586–761 (FHMHINLELL…KSINFVSSEH (176 aa)) enclose the PCI domain. Positions 783-817 (DKNEKTASNGHGRKTTQQQQQQQQKEQREQTHDEN) are disordered. A compositionally biased stretch (low complexity) spans 797 to 806 (TTQQQQQQQQ). Residues 807–817 (KEQREQTHDEN) are compositionally biased toward basic and acidic residues.

Belongs to the eIF-3 subunit C family. In terms of assembly, component of the eukaryotic translation initiation factor 3 (eIF-3) complex.

It is found in the cytoplasm. Functionally, component of the eukaryotic translation initiation factor 3 (eIF-3) complex, which is involved in protein synthesis of a specialized repertoire of mRNAs and, together with other initiation factors, stimulates binding of mRNA and methionyl-tRNAi to the 40S ribosome. The eIF-3 complex specifically targets and initiates translation of a subset of mRNAs involved in cell proliferation. The sequence is that of Eukaryotic translation initiation factor 3 subunit C from Meyerozyma guilliermondii (strain ATCC 6260 / CBS 566 / DSM 6381 / JCM 1539 / NBRC 10279 / NRRL Y-324) (Yeast).